A 205-amino-acid chain; its full sequence is Lymphotoxin-alpha (205 aa).

Residues 1-34 form the signal peptide; that stretch reads MTPPERLFLPRVCGTTLHLLLLGLLLVLLPGAQG. An O-linked (GalNAc...) threonine; partial glycan is attached at T41. A THD domain is found at 63-205; the sequence is PAAHLIGDPS…STVFFGAFAL (143 aa). N-linked (GlcNAc...) asparagine glycosylation occurs at N96.

Belongs to the tumor necrosis factor family. In terms of assembly, homotrimer, and heterotrimer of either two LTB and one LTA subunits or (less prevalent) two LTA and one LTB subunits. Interacts with TNFRSF14.

The protein resides in the secreted. The protein localises to the membrane. Functionally, cytokine that in its homotrimeric form binds to TNFRSF1A/TNFR1, TNFRSF1B/TNFBR and TNFRSF14/HVEM. In its heterotrimeric form with LTB binds to TNFRSF3/LTBR. Lymphotoxin is produced by lymphocytes and is cytotoxic for a wide range of tumor cells in vitro and in vivo. The chain is Lymphotoxin-alpha (LTA) from Homo sapiens (Human).